The primary structure comprises 261 residues: Type III pantothenate kinase (261 aa).

6-13 (DAGNSNIT) lines the ATP pocket. Substrate-binding positions include Y100 and 107-110 (GADR). The Proton acceptor role is filled by D109. Residue D129 participates in K(+) binding. ATP is bound at residue T132. Position 184 (T184) interacts with substrate.

The protein belongs to the type III pantothenate kinase family. As to quaternary structure, homodimer. It depends on NH4(+) as a cofactor. K(+) is required as a cofactor.

The protein localises to the cytoplasm. It catalyses the reaction (R)-pantothenate + ATP = (R)-4'-phosphopantothenate + ADP + H(+). The protein operates within cofactor biosynthesis; coenzyme A biosynthesis; CoA from (R)-pantothenate: step 1/5. Its function is as follows. Catalyzes the phosphorylation of pantothenate (Pan), the first step in CoA biosynthesis. In Solibacter usitatus (strain Ellin6076), this protein is Type III pantothenate kinase.